The primary structure comprises 280 residues: Putative pyruvate, phosphate dikinase regulatory protein (280 aa).

154–161 (GVSRTSKT) provides a ligand contact to ADP.

The protein belongs to the pyruvate, phosphate/water dikinase regulatory protein family. PDRP subfamily.

It catalyses the reaction N(tele)-phospho-L-histidyl/L-threonyl-[pyruvate, phosphate dikinase] + ADP = N(tele)-phospho-L-histidyl/O-phospho-L-threonyl-[pyruvate, phosphate dikinase] + AMP + H(+). The catalysed reaction is N(tele)-phospho-L-histidyl/O-phospho-L-threonyl-[pyruvate, phosphate dikinase] + phosphate + H(+) = N(tele)-phospho-L-histidyl/L-threonyl-[pyruvate, phosphate dikinase] + diphosphate. Its function is as follows. Bifunctional serine/threonine kinase and phosphorylase involved in the regulation of the pyruvate, phosphate dikinase (PPDK) by catalyzing its phosphorylation/dephosphorylation. In Nitrobacter hamburgensis (strain DSM 10229 / NCIMB 13809 / X14), this protein is Putative pyruvate, phosphate dikinase regulatory protein.